The sequence spans 205 residues: Casparian strip membrane protein 4 (205 aa).

Topologically, residues 1–58 (MDIEKTGSRREEEEPIVQKPKLEKGKGKAHVFAPPMNYSRIMEKHKQEKVSMAGWKRG) are cytoplasmic. The helical transmembrane segment at 59 to 79 (VAIFDFVLRLIAAITAMAAAA) threads the bilayer. The Extracellular portion of the chain corresponds to 80–109 (KMATTEETLPFFTQFLQFSADYTDLPTLSS). Residues 110–130 (FVIVNSIVGGYLTLSLPFSIV) form a helical membrane-spanning segment. Residues 131–148 (CILRPLAVPPRLFLILCD) lie on the Cytoplasmic side of the membrane. The chain crosses the membrane as a helical span at residues 149–169 (TAMMGLTMVAASASAAIVYLA). Over 170 to 205 (HNGNSSSNWLPVCQQFGDFCKERVAPWWLPLLQRLF) the chain is Extracellular. Asparagine 173 carries N-linked (GlcNAc...) asparagine glycosylation.

It belongs to the Casparian strip membrane proteins (CASP) family. As to quaternary structure, homodimer and heterodimers.

The protein resides in the cell membrane. In terms of biological role, regulates membrane-cell wall junctions and localized cell wall deposition. Required for establishment of the Casparian strip membrane domain (CSD) and the subsequent formation of Casparian strips, a cell wall modification of the root endodermis that determines an apoplastic barrier between the intraorganismal apoplasm and the extraorganismal apoplasm and prevents lateral diffusion. This chain is Casparian strip membrane protein 4, found in Raphanus sativus (Radish).